The sequence spans 130 residues: Large ribosomal subunit protein bL17 (130 aa).

This sequence belongs to the bacterial ribosomal protein bL17 family. Part of the 50S ribosomal subunit. Contacts protein L32.

This is Large ribosomal subunit protein bL17 from Pectobacterium atrosepticum (strain SCRI 1043 / ATCC BAA-672) (Erwinia carotovora subsp. atroseptica).